Here is a 207-residue protein sequence, read N- to C-terminus: MDLNIKSLAGQEAGSLGVAEGVFAADYNEALIHQVVVAYMAGARQGTKAQKTRSEVSGGGAKPWRQKGTGRARAGTIRSPIFRKGGVTFAAKPKSYKQKVNRKMYSGAVKSILSELLRLGRMTIVEELKLETPKTREFKSVIDSLGVKDVLFVVGVEEFSENLYLSSRNLKNVAVCDSVEINPVSLVCFENVVLTKKAIKEIEEKLV.

Residues 48–70 (KAQKTRSEVSGGGAKPWRQKGTG) form a disordered region.

It belongs to the universal ribosomal protein uL4 family. Part of the 50S ribosomal subunit.

Functionally, one of the primary rRNA binding proteins, this protein initially binds near the 5'-end of the 23S rRNA. It is important during the early stages of 50S assembly. It makes multiple contacts with different domains of the 23S rRNA in the assembled 50S subunit and ribosome. Forms part of the polypeptide exit tunnel. This is Large ribosomal subunit protein uL4 from Francisella tularensis subsp. mediasiatica (strain FSC147).